Consider the following 429-residue polypeptide: Serine hydroxymethyltransferase (429 aa).

(6S)-5,6,7,8-tetrahydrofolate-binding positions include Leu126 and 130–132 (GHL). Lys235 carries the post-translational modification N6-(pyridoxal phosphate)lysine. 359 to 361 (SPF) lines the (6S)-5,6,7,8-tetrahydrofolate pocket.

The protein belongs to the SHMT family. In terms of assembly, homodimer. It depends on pyridoxal 5'-phosphate as a cofactor.

It localises to the cytoplasm. It carries out the reaction (6R)-5,10-methylene-5,6,7,8-tetrahydrofolate + glycine + H2O = (6S)-5,6,7,8-tetrahydrofolate + L-serine. It functions in the pathway one-carbon metabolism; tetrahydrofolate interconversion. It participates in amino-acid biosynthesis; glycine biosynthesis; glycine from L-serine: step 1/1. Catalyzes the reversible interconversion of serine and glycine with tetrahydrofolate (THF) serving as the one-carbon carrier. This reaction serves as the major source of one-carbon groups required for the biosynthesis of purines, thymidylate, methionine, and other important biomolecules. Also exhibits THF-independent aldolase activity toward beta-hydroxyamino acids, producing glycine and aldehydes, via a retro-aldol mechanism. The chain is Serine hydroxymethyltransferase from Prochlorococcus marinus (strain MIT 9313).